The following is an 83-amino-acid chain: Cytochrome b559 subunit alpha (83 aa).

Residues Val-22 to Trp-36 form a helical membrane-spanning segment. His-24 is a binding site for heme.

Belongs to the PsbE/PsbF family. In terms of assembly, heterodimer of an alpha subunit and a beta subunit. PSII is composed of 1 copy each of membrane proteins PsbA, PsbB, PsbC, PsbD, PsbE, PsbF, PsbH, PsbI, PsbJ, PsbK, PsbL, PsbM, PsbT, PsbX, PsbY, PsbZ, Psb30/Ycf12, peripheral proteins PsbO, CyanoQ (PsbQ), PsbU, PsbV and a large number of cofactors. It forms dimeric complexes. Heme b serves as cofactor.

The protein resides in the cellular thylakoid membrane. In terms of biological role, this b-type cytochrome is tightly associated with the reaction center of photosystem II (PSII). PSII is a light-driven water:plastoquinone oxidoreductase that uses light energy to abstract electrons from H(2)O, generating O(2) and a proton gradient subsequently used for ATP formation. It consists of a core antenna complex that captures photons, and an electron transfer chain that converts photonic excitation into a charge separation. The chain is Cytochrome b559 subunit alpha from Synechococcus elongatus (strain ATCC 33912 / PCC 7942 / FACHB-805) (Anacystis nidulans R2).